Consider the following 116-residue polypeptide: Protein V2 (116 aa).

The protein belongs to the geminiviridae protein AV2/V2 family. In terms of assembly, interacts with host SGS3.

The protein resides in the host cytoplasm. It is found in the host perinuclear region. Functionally, through its interaction with host SGS3, acts as a suppressor of RNA-mediated gene silencing, also known as post-transcriptional gene silencing (PTGS), a mechanism of plant viral defense that limits the accumulation of viral RNAs. The polypeptide is Protein V2 (Tomato yellow leaf curl virus (strain Israel) (TYLCV)).